A 174-amino-acid chain; its full sequence is NADH-quinone oxidoreductase subunit I (174 aa).

4Fe-4S ferredoxin-type domains follow at residues 44–74 (LNRY…VEGD) and 90–119 (RVYQ…MTND). 8 residues coordinate [4Fe-4S] cluster: Cys-54, Cys-57, Cys-60, Cys-64, Cys-99, Cys-102, Cys-105, and Cys-109.

It belongs to the complex I 23 kDa subunit family. As to quaternary structure, NDH-1 is composed of 14 different subunits. Subunits NuoA, H, J, K, L, M, N constitute the membrane sector of the complex. [4Fe-4S] cluster is required as a cofactor.

The protein resides in the cell membrane. The catalysed reaction is a quinone + NADH + 5 H(+)(in) = a quinol + NAD(+) + 4 H(+)(out). Functionally, NDH-1 shuttles electrons from NADH, via FMN and iron-sulfur (Fe-S) centers, to quinones in the respiratory chain. The immediate electron acceptor for the enzyme in this species is believed to be menaquinone. Couples the redox reaction to proton translocation (for every two electrons transferred, four hydrogen ions are translocated across the cytoplasmic membrane), and thus conserves the redox energy in a proton gradient. This is NADH-quinone oxidoreductase subunit I from Mycobacterium sp. (strain KMS).